The sequence spans 283 residues: Small aggregate formation protein (283 aa).

It localises to the cytoplasm. Functionally, knockout of the gene for this protein causes small aggregate formation. May regulate the secretion or processing of a secreted factor that regulates aggregate size. The polypeptide is Small aggregate formation protein (smlA) (Dictyostelium discoideum (Social amoeba)).